The chain runs to 592 residues: Bifunctional enzyme BirA/CoaX (592 aa).

The interval 1–329 is biotin--protein ligase; sequence MTVLKLSHWR…ISLRSDDRPV (329 aa). Residues 83–259 form the BPL/LPL catalytic domain; the sequence is QTALKHECAS…ELDAVLLQYA (177 aa). Positions 336–592 are type III pantothenate kinase; it reads DSERFLLLDG…AAEGREYEHI (257 aa). 344-351 serves as a coordination point for ATP; that stretch reads DGGNSRLK. Substrate-binding positions include Y426 and 433–436; that span reads GSDR. Residue D435 is the Proton acceptor of the active site. T458 serves as a coordination point for ATP. Residue T508 coordinates substrate.

In the N-terminal section; belongs to the biotin--protein ligase family. This sequence in the C-terminal section; belongs to the type III pantothenate kinase family. NH4(+) serves as cofactor. It depends on K(+) as a cofactor.

It localises to the cytoplasm. It carries out the reaction biotin + L-lysyl-[protein] + ATP = N(6)-biotinyl-L-lysyl-[protein] + AMP + diphosphate + H(+). The enzyme catalyses (R)-pantothenate + ATP = (R)-4'-phosphopantothenate + ADP + H(+). It participates in cofactor biosynthesis; coenzyme A biosynthesis; CoA from (R)-pantothenate: step 1/5. Its function is as follows. Activates biotin to form biotinyl-5'-adenylate and transfers the biotin moiety to biotin-accepting proteins. Catalyzes the phosphorylation of pantothenate (Pan), the first step in CoA biosynthesis. The polypeptide is Bifunctional enzyme BirA/CoaX (birA/coaX) (Neisseria meningitidis serogroup B (strain ATCC BAA-335 / MC58)).